Reading from the N-terminus, the 430-residue chain is Enolase (430 aa).

Glutamine 167 contributes to the (2R)-2-phosphoglycerate binding site. Residue glutamate 209 is the Proton donor of the active site. Residues aspartate 245, glutamate 286, and aspartate 313 each coordinate Mg(2+). (2R)-2-phosphoglycerate is bound by residues lysine 338, arginine 367, serine 368, and lysine 389. Lysine 338 acts as the Proton acceptor in catalysis.

It belongs to the enolase family. Mg(2+) serves as cofactor.

The protein resides in the cytoplasm. It is found in the secreted. The protein localises to the cell surface. The catalysed reaction is (2R)-2-phosphoglycerate = phosphoenolpyruvate + H2O. It functions in the pathway carbohydrate degradation; glycolysis; pyruvate from D-glyceraldehyde 3-phosphate: step 4/5. In terms of biological role, catalyzes the reversible conversion of 2-phosphoglycerate (2-PG) into phosphoenolpyruvate (PEP). It is essential for the degradation of carbohydrates via glycolysis. The sequence is that of Enolase from Parasynechococcus marenigrum (strain WH8102).